Reading from the N-terminus, the 398-residue chain is Chalcone synthase 1 (398 aa).

Residue 58–65 (KFKRMCDK) coordinates CoA. The active-site Acyl-thioester intermediate is C167. Substrate contacts are provided by residues T200 and 219-220 (GD). A311 serves as a coordination point for CoA.

The protein belongs to the thiolase-like superfamily. Chalcone/stilbene synthases family. In terms of assembly, homodimer.

It carries out the reaction (E)-4-coumaroyl-CoA + 3 malonyl-CoA + 3 H(+) = 2',4,4',6'-tetrahydroxychalcone + 3 CO2 + 4 CoA. It participates in secondary metabolite biosynthesis; flavonoid biosynthesis. The primary product of this enzyme is 4,2',4',6'-tetrahydroxychalcone (also termed naringenin-chalcone or chalcone) which can under specific conditions spontaneously isomerize into naringenin. The polypeptide is Chalcone synthase 1 (CHS1) (Oryza sativa subsp. japonica (Rice)).